A 276-amino-acid chain; its full sequence is Diaminopimelate epimerase (276 aa).

Positions 13, 46, and 66 each coordinate substrate. Cys75 functions as the Proton donor in the catalytic mechanism. Substrate is bound by residues 76-77 (GN), Asn159, Asn192, and 210-211 (ER). The active-site Proton acceptor is Cys219. Position 220-221 (220-221 (GT)) interacts with substrate.

It belongs to the diaminopimelate epimerase family. As to quaternary structure, homodimer.

It localises to the cytoplasm. The catalysed reaction is (2S,6S)-2,6-diaminopimelate = meso-2,6-diaminopimelate. Its pathway is amino-acid biosynthesis; L-lysine biosynthesis via DAP pathway; DL-2,6-diaminopimelate from LL-2,6-diaminopimelate: step 1/1. Catalyzes the stereoinversion of LL-2,6-diaminopimelate (L,L-DAP) to meso-diaminopimelate (meso-DAP), a precursor of L-lysine and an essential component of the bacterial peptidoglycan. The polypeptide is Diaminopimelate epimerase (Stutzerimonas stutzeri (strain A1501) (Pseudomonas stutzeri)).